The primary structure comprises 437 residues: Serine hydroxymethyltransferase (437 aa).

(6S)-5,6,7,8-tetrahydrofolate-binding positions include leucine 130 and 134–136 (GHL). Position 239 is an N6-(pyridoxal phosphate)lysine (lysine 239). 363 to 365 (TPF) provides a ligand contact to (6S)-5,6,7,8-tetrahydrofolate.

Belongs to the SHMT family. Homodimer. Pyridoxal 5'-phosphate is required as a cofactor.

It is found in the cytoplasm. The enzyme catalyses (6R)-5,10-methylene-5,6,7,8-tetrahydrofolate + glycine + H2O = (6S)-5,6,7,8-tetrahydrofolate + L-serine. It participates in one-carbon metabolism; tetrahydrofolate interconversion. The protein operates within amino-acid biosynthesis; glycine biosynthesis; glycine from L-serine: step 1/1. In terms of biological role, catalyzes the reversible interconversion of serine and glycine with tetrahydrofolate (THF) serving as the one-carbon carrier. This reaction serves as the major source of one-carbon groups required for the biosynthesis of purines, thymidylate, methionine, and other important biomolecules. Also exhibits THF-independent aldolase activity toward beta-hydroxyamino acids, producing glycine and aldehydes, via a retro-aldol mechanism. The protein is Serine hydroxymethyltransferase of Bartonella henselae (strain ATCC 49882 / DSM 28221 / CCUG 30454 / Houston 1) (Rochalimaea henselae).